Reading from the N-terminus, the 135-residue chain is NAD(P)H-quinone oxidoreductase subunit 3 (135 aa).

Helical transmembrane passes span 15-35 (IVFF…SSLV), 79-99 (MFAL…PWAV), and 104-124 (LGLL…VALV).

It belongs to the complex I subunit 3 family. As to quaternary structure, NDH-1 can be composed of about 15 different subunits; different subcomplexes with different compositions have been identified which probably have different functions.

Its subcellular location is the cellular thylakoid membrane. The enzyme catalyses a plastoquinone + NADH + (n+1) H(+)(in) = a plastoquinol + NAD(+) + n H(+)(out). It catalyses the reaction a plastoquinone + NADPH + (n+1) H(+)(in) = a plastoquinol + NADP(+) + n H(+)(out). In terms of biological role, NDH-1 shuttles electrons from an unknown electron donor, via FMN and iron-sulfur (Fe-S) centers, to quinones in the respiratory and/or the photosynthetic chain. The immediate electron acceptor for the enzyme in this species is believed to be plastoquinone. Couples the redox reaction to proton translocation, and thus conserves the redox energy in a proton gradient. Cyanobacterial NDH-1 also plays a role in inorganic carbon-concentration. This Trichodesmium erythraeum (strain IMS101) protein is NAD(P)H-quinone oxidoreductase subunit 3.